The chain runs to 1197 residues: SRC kinase signaling inhibitor 1 (1197 aa).

The segment covering 19–45 (AEGRARSPREEVGPRDPGGRGEPDPER) has biased composition (basic and acidic residues). Residues 19-80 (AEGRARSPRE…GGSGGRRFSN (62 aa)) are disordered. S47 and S52 each carry phosphoserine. The span at 65–75 (LGGGGSGGSGG) shows a compositional bias: gly residues. S79 is subject to Phosphoserine. T86 carries the phosphothreonine modification. Phosphoserine is present on residues S87, S98, S178, S200, S204, S214, and S260. Residue Y276 is modified to Phosphotyrosine. Residues 319–415 (ASRESSPTRR…RRDVKPDEDL (97 aa)) are disordered. The segment covering 321–331 (RESSPTRRLNN) has biased composition (polar residues). Residues 332–341 (LSPASHLASS) show a composition bias toward low complexity. 3 positions are modified to phosphoserine: S333, S342, and S359. Over residues 348–366 (PSGLPSGLPSGSPSRSRLS) the composition is skewed to low complexity. R364 and R371 each carry omega-N-methylarginine. Phosphoserine occurs at positions 378, 397, and 399. The segment covering 391 to 400 (PTSQGVSPSP) has biased composition (polar residues). Basic and acidic residues predominate over residues 404-415 (LERRDVKPDEDL). Residue Y431 is modified to Phosphotyrosine. The disordered stretch occupies residues 501–676 (GFRLPPSSPQ…AVSSTPAGQP (176 aa)). The segment covering 520–531 (GGPPPPHSPYSG) has biased composition (pro residues). Phosphoserine occurs at positions 527, 530, and 534. R535 is modified (omega-N-methylarginine). Phosphoserine is present on residues S537, S547, S549, S551, and S556. Residues 595-607 (KDTETRERMEAME) show a composition bias toward basic and acidic residues. 2 positions are modified to phosphoserine: S631 and S655. A phosphothreonine mark is found at T658 and T671. Residues 681-731 (RLQMQMHLRGLQNSASDLRGQLQQLRKLQLQNQESVRALLKRTEAELSMRV) form an interaction with SNAP25 region. Coiled coils occupy residues 688–708 (LRGL…LRKL) and 760–780 (EELI…IQRD). Phosphoserine occurs at positions 878 and 900. 2 disordered regions span residues 891–949 (GLDF…ERDW) and 983–1065 (DCAS…VVTS). Position 918 is a phosphothreonine (T918). S1021 carries the phosphoserine modification. Residues 1036–1045 (KSPPPPPPRR) show a composition bias toward pro residues. Residues S1077 and S1094 each carry the phosphoserine modification. The segment at 1141–1163 (SRLKAAQGPAGSPDKGKHGKQRT) is disordered.

It belongs to the SRCIN1 family. Interacts with BCAR1/p130Cas through its C-terminal domain and with CSK, CTTN and SRC. Also interacts with MAPRE3/EB3, SORBS3/vinexin and the N-terminal coiled-coil region of SNAP25. Tyrosine-phosphorylated in response to EGF and to cell adhesion to integrin ligands. Expressed exclusively in brain. Abundant in telencephalon and expressed moderately in cerebellum, hypothalamus, thalamus, superior and inferior colliculi, and olfactory bulb. No expression detected in medulla oblongata, spinal cord or pituitary gland. Enriched in the neuropil rather than soma in the thalamus, corpus striatum and cerebral cortex. Detected in astrocytes.

The protein resides in the cytoplasm. It is found in the cytoskeleton. Its subcellular location is the cell projection. It localises to the axon. The protein localises to the dendrite. The protein resides in the presynapse. It is found in the postsynapse. Its subcellular location is the postsynaptic density. In terms of biological role, acts as a negative regulator of SRC by activating CSK which inhibits SRC activity and downstream signaling, leading to impaired cell spreading and migration. Regulates dendritic spine morphology. Involved in calcium-dependent exocytosis. May play a role in neurotransmitter release or synapse maintenance. This is SRC kinase signaling inhibitor 1 from Rattus norvegicus (Rat).